The following is a 349-amino-acid chain: Selenide, water dikinase (349 aa).

Cysteine 17 is an active-site residue. Residues lysine 20 and 48-50 each bind ATP; that span reads MAD. Aspartate 51 serves as a coordination point for Mg(2+). ATP is bound by residues aspartate 68, aspartate 91, and 139–141; that span reads GHS. Aspartate 91 lines the Mg(2+) pocket. Aspartate 227 provides a ligand contact to Mg(2+).

This sequence belongs to the selenophosphate synthase 1 family. Class I subfamily. Homodimer. Mg(2+) is required as a cofactor.

The catalysed reaction is hydrogenselenide + ATP + H2O = selenophosphate + AMP + phosphate + 2 H(+). Synthesizes selenophosphate from selenide and ATP. The sequence is that of Selenide, water dikinase from Rhizobium meliloti (strain 1021) (Ensifer meliloti).